The sequence spans 213 residues: MISYLKGIVAGIQNVGSNRVILTLEVNGMGYDLQIPQRLAKQLPTTGDLVQIFTHYQVREEIPLLYGFSSPAERDLFRHLLSVSGVGAASAIALLDTLELPDLVQAIIAANVQILIQAPGVGKKIAERVCLELKAKLIEWRKSAGFFVATEGPAPGILEEVQMTLFALGYTAHEVSHALHVVSEDIGLPKDAYVEDWIKQAIAHLSSSEQVSH.

Residues 1-69 form a domain I region; that stretch reads MISYLKGIVA…EEIPLLYGFS (69 aa). Positions 70 to 148 are domain II; that stretch reads SPAERDLFRH…EWRKSAGFFV (79 aa). The flexible linker stretch occupies residues 149 to 158; that stretch reads ATEGPAPGIL. The tract at residues 158 to 213 is domain III; that stretch reads LEEVQMTLFALGYTAHEVSHALHVVSEDIGLPKDAYVEDWIKQAIAHLSSSEQVSH.

This sequence belongs to the RuvA family. In terms of assembly, homotetramer. Forms an RuvA(8)-RuvB(12)-Holliday junction (HJ) complex. HJ DNA is sandwiched between 2 RuvA tetramers; dsDNA enters through RuvA and exits via RuvB. An RuvB hexamer assembles on each DNA strand where it exits the tetramer. Each RuvB hexamer is contacted by two RuvA subunits (via domain III) on 2 adjacent RuvB subunits; this complex drives branch migration. In the full resolvosome a probable DNA-RuvA(4)-RuvB(12)-RuvC(2) complex forms which resolves the HJ.

It localises to the cytoplasm. Functionally, the RuvA-RuvB-RuvC complex processes Holliday junction (HJ) DNA during genetic recombination and DNA repair, while the RuvA-RuvB complex plays an important role in the rescue of blocked DNA replication forks via replication fork reversal (RFR). RuvA specifically binds to HJ cruciform DNA, conferring on it an open structure. The RuvB hexamer acts as an ATP-dependent pump, pulling dsDNA into and through the RuvAB complex. HJ branch migration allows RuvC to scan DNA until it finds its consensus sequence, where it cleaves and resolves the cruciform DNA. This Nostoc sp. (strain PCC 7120 / SAG 25.82 / UTEX 2576) protein is Holliday junction branch migration complex subunit RuvA.